A 267-amino-acid chain; its full sequence is 3-methyl-2-oxobutanoate hydroxymethyltransferase (267 aa).

Residues aspartate 42 and aspartate 86 each contribute to the Mg(2+) site. 3-methyl-2-oxobutanoate contacts are provided by residues 42–43 (DS), aspartate 86, and lysine 116. Position 118 (glutamate 118) interacts with Mg(2+). The active-site Proton acceptor is the glutamate 185.

It belongs to the PanB family. As to quaternary structure, homodecamer; pentamer of dimers. The cofactor is Mg(2+).

It is found in the cytoplasm. The catalysed reaction is 3-methyl-2-oxobutanoate + (6R)-5,10-methylene-5,6,7,8-tetrahydrofolate + H2O = 2-dehydropantoate + (6S)-5,6,7,8-tetrahydrofolate. The protein operates within cofactor biosynthesis; (R)-pantothenate biosynthesis; (R)-pantoate from 3-methyl-2-oxobutanoate: step 1/2. In terms of biological role, catalyzes the reversible reaction in which hydroxymethyl group from 5,10-methylenetetrahydrofolate is transferred onto alpha-ketoisovalerate to form ketopantoate. The protein is 3-methyl-2-oxobutanoate hydroxymethyltransferase of Parasynechococcus marenigrum (strain WH8102).